The chain runs to 1438 residues: DNA polymerase III PolC-type (1438 aa).

In terms of domain architecture, Exonuclease spans 422 to 578; the sequence is YVVFDVETTG…YDTEATAYIF (157 aa).

It belongs to the DNA polymerase type-C family. PolC subfamily.

It is found in the cytoplasm. The enzyme catalyses DNA(n) + a 2'-deoxyribonucleoside 5'-triphosphate = DNA(n+1) + diphosphate. Required for replicative DNA synthesis. This DNA polymerase also exhibits 3' to 5' exonuclease activity. In Staphylococcus aureus (strain MRSA252), this protein is DNA polymerase III PolC-type.